The chain runs to 898 residues: DNA mismatch repair protein MutS (898 aa).

Position 646–653 (646–653 (GPNMGGKS)) interacts with ATP.

The protein belongs to the DNA mismatch repair MutS family.

Its function is as follows. This protein is involved in the repair of mismatches in DNA. It is possible that it carries out the mismatch recognition step. This protein has a weak ATPase activity. The chain is DNA mismatch repair protein MutS from Brucella ovis (strain ATCC 25840 / 63/290 / NCTC 10512).